The sequence spans 201 residues: LexA repressor 1 (201 aa).

A DNA-binding region (H-T-H motif) is located at residues 27-47 (LAEIAQAFGFASRNAAQKHVQ). Active-site for autocatalytic cleavage activity residues include Ser-122 and Lys-159.

It belongs to the peptidase S24 family. In terms of assembly, homodimer.

The enzyme catalyses Hydrolysis of Ala-|-Gly bond in repressor LexA.. Represses a number of genes involved in the response to DNA damage (SOS response), including recA and lexA. In the presence of single-stranded DNA, RecA interacts with LexA causing an autocatalytic cleavage which disrupts the DNA-binding part of LexA, leading to derepression of the SOS regulon and eventually DNA repair. This chain is LexA repressor 1, found in Xanthomonas oryzae pv. oryzae (strain KACC10331 / KXO85).